A 423-amino-acid polypeptide reads, in one-letter code: Dihydroorotase (423 aa).

Residues histidine 60 and histidine 62 each coordinate Zn(2+). Substrate is bound by residues 62–64 (HFR) and asparagine 94. Residues aspartate 151, histidine 178, and histidine 231 each contribute to the Zn(2+) site. A substrate-binding site is contributed by asparagine 277. Aspartate 304 contributes to the Zn(2+) binding site. Aspartate 304 is a catalytic residue. Histidine 308 is a binding site for substrate.

Belongs to the metallo-dependent hydrolases superfamily. DHOase family. Class I DHOase subfamily. Zn(2+) is required as a cofactor.

It carries out the reaction (S)-dihydroorotate + H2O = N-carbamoyl-L-aspartate + H(+). The protein operates within pyrimidine metabolism; UMP biosynthesis via de novo pathway; (S)-dihydroorotate from bicarbonate: step 3/3. Catalyzes the reversible cyclization of carbamoyl aspartate to dihydroorotate. In Lactococcus lactis subsp. lactis (strain IL1403) (Streptococcus lactis), this protein is Dihydroorotase.